Consider the following 349-residue polypeptide: Homeobox protein engrailed (349 aa).

Disordered stretches follow at residues 26 to 53 (DGPS…SPLS), 146 to 210 (GKET…PLPP), 228 to 252 (PSSG…EKRP), and 327 to 349 (STIP…ARIE). 2 stretches are compositionally biased toward basic and acidic residues: residues 173–188 (QMKK…RTES) and 242–252 (DKAITPDEKRP). The homeobox DNA-binding region spans 249–308 (EKRPRTAFTAEQLSRLKHEFNENRYLTERRRQDLARELGLHENQIKIWFQNNRAKLKKSS).

This sequence belongs to the engrailed homeobox family.

Its subcellular location is the nucleus. This is Homeobox protein engrailed from Artemia franciscana (Brine shrimp).